The following is a 205-amino-acid chain: Cytochrome c biogenesis ATP-binding export protein CcmA 2 (205 aa).

The 204-residue stretch at 2–205 (LEARDLYCER…LALTGGGAGL (204 aa)) folds into the ABC transporter domain. 34-41 (GGNGAGKT) contacts ATP.

The protein belongs to the ABC transporter superfamily. CcmA exporter (TC 3.A.1.107) family. The complex is composed of two ATP-binding proteins (CcmA) and two transmembrane proteins (CcmB).

Its subcellular location is the cell inner membrane. The enzyme catalyses heme b(in) + ATP + H2O = heme b(out) + ADP + phosphate + H(+). Part of the ABC transporter complex CcmAB involved in the biogenesis of c-type cytochromes; once thought to export heme, this seems not to be the case, but its exact role is uncertain. Responsible for energy coupling to the transport system. The chain is Cytochrome c biogenesis ATP-binding export protein CcmA 2 from Salmonella typhimurium (strain LT2 / SGSC1412 / ATCC 700720).